The sequence spans 271 residues: Methylthioribulose-1-phosphate dehydratase (271 aa).

Cysteine 123 contributes to the substrate binding site. Residues histidine 141 and histidine 143 each contribute to the Zn(2+) site. Glutamate 166 (proton donor/acceptor) is an active-site residue. Residue histidine 231 participates in Zn(2+) binding.

This sequence belongs to the aldolase class II family. MtnB subfamily. The cofactor is Zn(2+).

The protein localises to the cytoplasm. It carries out the reaction 5-(methylsulfanyl)-D-ribulose 1-phosphate = 5-methylsulfanyl-2,3-dioxopentyl phosphate + H2O. Its pathway is amino-acid biosynthesis; L-methionine biosynthesis via salvage pathway; L-methionine from S-methyl-5-thio-alpha-D-ribose 1-phosphate: step 2/6. Its function is as follows. Catalyzes the dehydration of methylthioribulose-1-phosphate (MTRu-1-P) into 2,3-diketo-5-methylthiopentyl-1-phosphate (DK-MTP-1-P). The sequence is that of Methylthioribulose-1-phosphate dehydratase from Candida dubliniensis (strain CD36 / ATCC MYA-646 / CBS 7987 / NCPF 3949 / NRRL Y-17841) (Yeast).